The following is a 304-amino-acid chain: Mitochondrial RNA-splicing protein MRS4 (304 aa).

Solcar repeat units lie at residues 21–108 (APLH…CKAR), 118–200 (HQPM…ASKF), and 207–300 (YNPL…AKHF). A run of 6 helical transmembrane segments spans residues 23–41 (LHSQLLAGAFAGIMEHSLM), 83–102 (GVQSVILGAGPAHAVYFGTY), 120–139 (PMKTALSGTIATIAADALMN), 175–194 (SYPTTLAMNIPFAAFNFMIY), 209–228 (PLIHCLCGGISGATCAALTT), and 275–288 (GLKPRIVANIPATA).

Belongs to the mitochondrial carrier (TC 2.A.29) family.

Its subcellular location is the mitochondrion inner membrane. MRS4 suppresses a mitochondrial splice defect in the first intron of the COB gene. It may act as a carrier, exerting its suppressor activity via modulation of solute concentrations in the mitochondrion (possibly of cations). Not essential. The sequence is that of Mitochondrial RNA-splicing protein MRS4 (MRS4) from Saccharomyces cerevisiae (strain ATCC 204508 / S288c) (Baker's yeast).